Reading from the N-terminus, the 223-residue chain is Cytotoxic T-lymphocyte protein 4 (223 aa).

The signal sequence occupies residues Met1–Ser35. The Ig-like V-type domain maps to Glu36–Asn145. The Extracellular portion of the chain corresponds to Glu36–Asp161. The tract at residues Val46–Ser50 is homodimerization. 2 cysteine pairs are disulfide-bonded: Cys58/Cys129 and Cys85/Cys103. N-linked (GlcNAc...) asparagine glycosylation is found at Asn108 and Asn113. The important for interaction with CD80 and CD86 stretch occupies residues Met134–Tyr139. Asn145 carries N-linked (GlcNAc...) asparagine glycosylation. The interval Tyr150–Glu155 is homodimerization. The chain crosses the membrane as a helical span at residues Phe162–Ser182. The Cytoplasmic segment spans residues Ala183–Asn223. Tyr201 bears the Phosphotyrosine; by TXK and JAK2 mark.

In terms of assembly, homodimer; disulfide-linked. Binds to CD80/B7-1 and CD86/B7.2. Interacts with ICOSLG. Post-translationally, N-glycosylation is important for dimerization. Phosphorylation at Tyr-201 prevents binding to the AP-2 adapter complex, blocks endocytosis, and leads to retention of CTLA4 on the cell surface. In terms of tissue distribution, widely expressed with highest levels in lymphoid tissues.

It localises to the cell membrane. Inhibitory receptor acting as a major negative regulator of T-cell responses. The affinity of CTLA4 for its natural B7 family ligands, CD80 and CD86, is considerably stronger than the affinity of their cognate stimulatory coreceptor CD28. The polypeptide is Cytotoxic T-lymphocyte protein 4 (Ctla4) (Mus musculus (Mouse)).